The primary structure comprises 940 residues: Isoleucine--tRNA ligase (940 aa).

The 'HIGH' region signature appears at 58–68; it reads PYANGSIHIGH. Glu-564 serves as a coordination point for L-isoleucyl-5'-AMP. A 'KMSKS' region motif is present at residues 605–609; sequence KMSKS. An ATP-binding site is contributed by Lys-608. 4 residues coordinate Zn(2+): Cys-903, Cys-906, Cys-923, and Cys-926.

Belongs to the class-I aminoacyl-tRNA synthetase family. IleS type 1 subfamily. As to quaternary structure, monomer. The cofactor is Zn(2+).

It is found in the cytoplasm. It carries out the reaction tRNA(Ile) + L-isoleucine + ATP = L-isoleucyl-tRNA(Ile) + AMP + diphosphate. Catalyzes the attachment of isoleucine to tRNA(Ile). As IleRS can inadvertently accommodate and process structurally similar amino acids such as valine, to avoid such errors it has two additional distinct tRNA(Ile)-dependent editing activities. One activity is designated as 'pretransfer' editing and involves the hydrolysis of activated Val-AMP. The other activity is designated 'posttransfer' editing and involves deacylation of mischarged Val-tRNA(Ile). This chain is Isoleucine--tRNA ligase, found in Shewanella sp. (strain MR-4).